Consider the following 739-residue polypeptide: Catalase-peroxidase (739 aa).

The first 23 residues, 1 to 23, serve as a signal peptide directing secretion; the sequence is MLKKIVTALGMSGMLLASNSAIA. A cross-link (tryptophyl-tyrosyl-methioninium (Trp-Tyr) (with M-247)) is located at residues 100–221; that stretch reads WHDAGTYRIY…YAATQMGLIY (122 aa). His-101 serves as the catalytic Proton acceptor. The tryptophyl-tyrosyl-methioninium (Tyr-Met) (with W-100) cross-link spans 221 to 247; the sequence is YVNPEGPDGKPDIKGAASEIRQAFRAM. His-262 is a heme b binding site.

It belongs to the peroxidase family. Peroxidase/catalase subfamily. In terms of assembly, homodimer or homotetramer. Heme b is required as a cofactor. In terms of processing, formation of the three residue Trp-Tyr-Met cross-link is important for the catalase, but not the peroxidase activity of the enzyme.

It catalyses the reaction H2O2 + AH2 = A + 2 H2O. The catalysed reaction is 2 H2O2 = O2 + 2 H2O. Bifunctional enzyme with both catalase and broad-spectrum peroxidase activity. This chain is Catalase-peroxidase, found in Francisella tularensis subsp. novicida (strain U112).